The following is a 351-amino-acid chain: uncharacterized protein (351 aa).

Mn(2+)-binding residues include D215, D226, H290, E319, and E333.

It belongs to the peptidase M24B family. It depends on Mn(2+) as a cofactor.

This is an uncharacterized protein from Staphylococcus epidermidis (strain ATCC 35984 / DSM 28319 / BCRC 17069 / CCUG 31568 / BM 3577 / RP62A).